The primary structure comprises 481 residues: Zygotic gap protein knirps (481 aa).

The segment at residues 2–78 (NQTCKVCGEP…VGMSKGGSRY (77 aa)) is a DNA-binding region (nuclear receptor). 2 consecutive NR C4-type zinc fingers follow at residues 5–25 (CKVC…CEGC) and 42–66 (CKND…LRKC). 5 stretches are compositionally biased toward low complexity: residues 100–111 (AAAGKAPGHATG), 127–148 (QQQQ…QQQQ), 245–264 (TPPT…AASP), 316–335 (SHSS…SPLS), and 420–440 (TTNS…TSST). Disordered stretches follow at residues 100-161 (AAAG…GYTG), 231-294 (SVDS…PHTI), 308-336 (LLPG…PLSF), and 420-442 (TTNS…STEA).

Belongs to the nuclear hormone receptor family. NR0 subfamily.

It is found in the nucleus. Its function is as follows. Transcriptional repressor. Binds to multiple sites in the eve stripe 3 enhancer element. Plays an essential role in the segmentation process both by refining the expression patterns of gap genes and by establishing pair-rules stripes of gene expression. This chain is Zygotic gap protein knirps (kni), found in Drosophila virilis (Fruit fly).